The following is a 194-amino-acid chain: ATP-dependent Clp protease proteolytic subunit 3 (194 aa).

Serine 96 acts as the Nucleophile in catalysis. Residue histidine 121 is part of the active site.

It belongs to the peptidase S14 family. In terms of assembly, fourteen ClpP subunits assemble into 2 heptameric rings which stack back to back to give a disk-like structure with a central cavity, resembling the structure of eukaryotic proteasomes.

Its subcellular location is the cytoplasm. The enzyme catalyses Hydrolysis of proteins to small peptides in the presence of ATP and magnesium. alpha-casein is the usual test substrate. In the absence of ATP, only oligopeptides shorter than five residues are hydrolyzed (such as succinyl-Leu-Tyr-|-NHMec, and Leu-Tyr-Leu-|-Tyr-Trp, in which cleavage of the -Tyr-|-Leu- and -Tyr-|-Trp bonds also occurs).. Functionally, cleaves peptides in various proteins in a process that requires ATP hydrolysis. Has a chymotrypsin-like activity. Plays a major role in the degradation of misfolded proteins. The polypeptide is ATP-dependent Clp protease proteolytic subunit 3 (Rhizobium johnstonii (strain DSM 114642 / LMG 32736 / 3841) (Rhizobium leguminosarum bv. viciae)).